Reading from the N-terminus, the 535-residue chain is Beta-amylase (535 aa).

The propeptide at 1-2 is removed in mature form; it reads ME. Position 3 is an N-acetylvaline (Val-3). 3 residues coordinate substrate: Asp-51, His-91, and Asp-99. Glu-184 acts as the Proton donor in catalysis. Substrate-binding residues include Lys-293, His-298, and Thr-340. Glu-378 (proton acceptor) is an active-site residue. Substrate is bound by residues 379-380 and Arg-418; that span reads NA. Tandem repeats lie at residues 489–499, 500–510, and 511–521. The interval 489–532 is 4 X 11 AA tandem repeats; the sequence is GPTGGMGGQAEGPTCGMGGQVKGPTGGMGGQAEDPTSGMGGELP. Residues 490-535 constitute a propeptide, removed in mature form; sequence PTGGMGGQAEGPTCGMGGQVKGPTGGMGGQAEDPTSGMGGELPATM. Residues 513–535 form a disordered region; it reads TGGMGGQAEDPTSGMGGELPATM. The 4; approximate repeat unit spans residues 522–532; it reads DPTSGMGGELP.

Belongs to the glycosyl hydrolase 14 family. In terms of assembly, monomer. Endosperm.

It catalyses the reaction Hydrolysis of (1-&gt;4)-alpha-D-glucosidic linkages in polysaccharides so as to remove successive maltose units from the non-reducing ends of the chains.. Functionally, catalyzes the liberation of maltose from 1,4-alpha-D glucans. The sequence is that of Beta-amylase from Hordeum vulgare subsp. spontaneum (Wild barley).